The sequence spans 309 residues: Taste receptor type 2 member 31 (309 aa).

At 1 to 2 (MI) the chain is on the extracellular side. The helical transmembrane segment at 3–23 (TFLPTIFSILVVVIFVIGNFG) threads the bilayer. The Cytoplasmic portion of the chain corresponds to 24–55 (NGFIALVNSIEWVKRQKISFADQILTALAVSR). The helical transmembrane segment at 56–76 (VGLLWALLLNWYSTVFNPAFY) threads the bilayer. Topologically, residues 77–100 (SVGVRTTVYDVWTVTGHFSNWLAT) are extracellular. Residues 101–121 (SLSIFYLLKIANFSNLIFLHL) form a helical membrane-spanning segment. Topologically, residues 122–126 (KRRVK) are cytoplasmic. A helical membrane pass occupies residues 127 to 147 (SVILVMLLGPLLFLACQLFVI). Residues 148–181 (NMKEILRTKEYEGNMTWKIKLRSAMYLSDATITT) are Extracellular-facing. N-linked (GlcNAc...) asparagine glycosylation is present at N161. A helical membrane pass occupies residues 182 to 202 (LANLVPFTLTLLSFLLLICSL). At 203 to 229 (CKHLNKMQLHGKGSQDPSTKVHIKVLQ) the chain is on the cytoplasmic side. A helical transmembrane segment spans residues 230 to 250 (TVISFLLLCAIYFLSIMISVW). Residues 251-259 (SFGSLENKP) lie on the Extracellular side of the membrane. A helical transmembrane segment spans residues 260 to 280 (VFMFCKAIRFSYPSIHPFILI). Residues 281-309 (WGNKKLKQTFLSVLRQVRYWVKGEKPSSP) are Cytoplasmic-facing.

The protein belongs to the G-protein coupled receptor T2R family.

It is found in the membrane. In terms of biological role, receptor that may play a role in the perception of bitterness and is gustducin-linked. May play a role in sensing the chemical composition of the gastrointestinal content. The activity of this receptor may stimulate alpha gustducin, mediate PLC-beta-2 activation and lead to the gating of TRPM5. In Pongo pygmaeus (Bornean orangutan), this protein is Taste receptor type 2 member 31 (TAS2R31).